A 299-amino-acid chain; its full sequence is Phosphoribosylaminoimidazole-succinocarboxamide synthase (299 aa).

It belongs to the SAICAR synthetase family.

The enzyme catalyses 5-amino-1-(5-phospho-D-ribosyl)imidazole-4-carboxylate + L-aspartate + ATP = (2S)-2-[5-amino-1-(5-phospho-beta-D-ribosyl)imidazole-4-carboxamido]succinate + ADP + phosphate + 2 H(+). Its pathway is purine metabolism; IMP biosynthesis via de novo pathway; 5-amino-1-(5-phospho-D-ribosyl)imidazole-4-carboxamide from 5-amino-1-(5-phospho-D-ribosyl)imidazole-4-carboxylate: step 1/2. The protein is Phosphoribosylaminoimidazole-succinocarboxamide synthase (ade7) of Schizosaccharomyces pombe (strain 972 / ATCC 24843) (Fission yeast).